Here is a 255-residue protein sequence, read N- to C-terminus: uncharacterized protein (255 aa).

Belongs to the methyltransferase superfamily.

This is an uncharacterized protein from Mycolicibacterium vanbaalenii (strain DSM 7251 / JCM 13017 / BCRC 16820 / KCTC 9966 / NRRL B-24157 / PYR-1) (Mycobacterium vanbaalenii).